A 282-amino-acid polypeptide reads, in one-letter code: Probable endonuclease 4 (282 aa).

Residues histidine 66, histidine 106, glutamate 143, aspartate 177, histidine 180, histidine 214, aspartate 227, histidine 229, and glutamate 259 each coordinate Zn(2+).

The protein belongs to the AP endonuclease 2 family. It depends on Zn(2+) as a cofactor.

The enzyme catalyses Endonucleolytic cleavage to 5'-phosphooligonucleotide end-products.. Functionally, endonuclease IV plays a role in DNA repair. It cleaves phosphodiester bonds at apurinic or apyrimidinic (AP) sites, generating a 3'-hydroxyl group and a 5'-terminal sugar phosphate. In Nitratidesulfovibrio vulgaris (strain DP4) (Desulfovibrio vulgaris), this protein is Probable endonuclease 4.